Consider the following 994-residue polypeptide: Glycine dehydrogenase (decarboxylating), mitochondrial (994 aa).

A mitochondrion-targeting transit peptide spans Met1–Tyr21. Lys742 bears the N6-(pyridoxal phosphate)lysine mark.

This sequence belongs to the GcvP family. As to quaternary structure, homodimer. The glycine cleavage system is composed of four proteins: P, T, L and H. It depends on pyridoxal 5'-phosphate as a cofactor.

The protein localises to the mitochondrion. It catalyses the reaction N(6)-[(R)-lipoyl]-L-lysyl-[glycine-cleavage complex H protein] + glycine + H(+) = N(6)-[(R)-S(8)-aminomethyldihydrolipoyl]-L-lysyl-[glycine-cleavage complex H protein] + CO2. The glycine cleavage system catalyzes the degradation of glycine. The P protein binds the alpha-amino group of glycine through its pyridoxal phosphate cofactor; CO(2) is released and the remaining methylamine moiety is then transferred to the lipoamide cofactor of the H protein. This Dictyostelium discoideum (Social amoeba) protein is Glycine dehydrogenase (decarboxylating), mitochondrial (gcvP).